Here is a 304-residue protein sequence, read N- to C-terminus: Secreted mono- and diacylglycerol lipase MDL4 (304 aa).

An N-terminal signal peptide occupies residues 1–19 (MRFGGVVSLVLGFIVSVLA). Cys-55 and Cys-297 form a disulfide bridge. N-linked (GlcNAc...) asparagine glycosylation is found at Asn-102 and Asn-161. The active-site Nucleophile is the Ser-171. Asp-228 is an active-site residue. N-linked (GlcNAc...) asparagine glycosylation occurs at Asn-253. His-281 is a catalytic residue.

The protein belongs to the AB hydrolase superfamily. Lipase family. Class 3 subfamily.

It localises to the secreted. The protein resides in the cell wall. It catalyses the reaction a monoacylglycerol + H2O = glycerol + a fatty acid + H(+). The catalysed reaction is a diacylglycerol + H2O = a monoacylglycerol + a fatty acid + H(+). Secreted lipase involved in Dandruff and seborrheic dermatitis (D/SD) probably via lipase-mediated breakdown of sebaceous lipids and release of irritating free fatty acids. Shows activity against monoglyceride and diglyceride substrates, but not triglyceride substrates and does not exhibit regio-selective production of diacylglycerols. Cleaves oleic acid from 1,2 isomers of diolein on both the 1 and the 2 position of the glycerol backbone, resulting mainly in free fatty acids but no monoolein is detected. Shows activity on monoolein and liberates mostly free fatty acids, but can also perform the reverse reaction and produce diolein. This chain is Secreted mono- and diacylglycerol lipase MDL4, found in Malassezia globosa (strain ATCC MYA-4612 / CBS 7966) (Dandruff-associated fungus).